The sequence spans 87 residues: NADH-ubiquinone oxidoreductase chain 4L (87 aa).

Helical transmembrane passes span phenylalanine 22–glycine 42 and leucine 49–valine 69.

It belongs to the complex I subunit 4L family.

It is found in the mitochondrion membrane. The catalysed reaction is a ubiquinone + NADH + 5 H(+)(in) = a ubiquinol + NAD(+) + 4 H(+)(out). Functionally, core subunit of the mitochondrial membrane respiratory chain NADH dehydrogenase (Complex I) that is believed to belong to the minimal assembly required for catalysis. Complex I functions in the transfer of electrons from NADH to the respiratory chain. The immediate electron acceptor for the enzyme is believed to be ubiquinone. This Apis mellifera ligustica (Common honeybee) protein is NADH-ubiquinone oxidoreductase chain 4L (ND4L).